We begin with the raw amino-acid sequence, 360 residues long: Protein Wnt-2 (360 aa).

An N-terminal signal peptide occupies residues 1–25 (MNAPLGGIWPWLPLLLTWLTPEVSS). Cystine bridges form between Cys-76–Cys-87, Cys-127–Cys-135, Cys-137–Cys-157, Cys-206–Cys-220, Cys-208–Cys-215, Cys-278–Cys-309, Cys-294–Cys-304, Cys-308–Cys-348, Cys-324–Cys-339, Cys-326–Cys-336, and Cys-331–Cys-332. A lipid anchor (O-palmitoleoyl serine; by PORCN) is attached at Ser-212. Asn-295 carries N-linked (GlcNAc...) asparagine glycosylation.

Belongs to the Wnt family. Palmitoleoylation is required for efficient binding to frizzled receptors. Depalmitoleoylation leads to Wnt signaling pathway inhibition.

It is found in the secreted. The protein resides in the extracellular space. The protein localises to the extracellular matrix. In terms of biological role, ligand for members of the frizzled family of seven transmembrane receptors. Functions in the canonical Wnt signaling pathway that results in activation of transcription factors of the TCF/LEF family. Functions as a upstream regulator of FGF10 expression. Plays an important role in embryonic lung development. May contribute to embryonic brain development by regulating the proliferation of dopaminergic precursors and neurons. This chain is Protein Wnt-2 (WNT2), found in Felis catus (Cat).